The primary structure comprises 202 residues: Large ribosomal subunit protein bL25 (202 aa).

Belongs to the bacterial ribosomal protein bL25 family. CTC subfamily. Part of the 50S ribosomal subunit; part of the 5S rRNA/L5/L18/L25 subcomplex. Contacts the 5S rRNA. Binds to the 5S rRNA independently of L5 and L18.

This is one of the proteins that binds to the 5S RNA in the ribosome where it forms part of the central protuberance. The chain is Large ribosomal subunit protein bL25 from Methylococcus capsulatus (strain ATCC 33009 / NCIMB 11132 / Bath).